Reading from the N-terminus, the 226-residue chain is MKHGKNYKNALAKYDSAASYELPKAVDIVKELKYAKFDETVEVHVSLTLGKGQSVRDTLVLPHQFRGEKKVLVFCTDDRVKEALDAGAAYAGSTEYIEKVKGGWLDFDIAVATPDMMKDVGRLGMVLGRRGLMPNPKTGTVTTDIASAINELKKGRVEFRADKGGVVHLPVGKVSMDSSKIVENVQALINETMRKKPADAKGDYIRSVSISSTMGPGVWVDYKVGE.

This sequence belongs to the universal ribosomal protein uL1 family. Part of the 50S ribosomal subunit.

In terms of biological role, binds directly to 23S rRNA. The L1 stalk is quite mobile in the ribosome, and is involved in E site tRNA release. Functionally, protein L1 is also a translational repressor protein, it controls the translation of the L11 operon by binding to its mRNA. The protein is Large ribosomal subunit protein uL1 of Treponema denticola (strain ATCC 35405 / DSM 14222 / CIP 103919 / JCM 8153 / KCTC 15104).